A 106-amino-acid chain; its full sequence is MSHYIELTEENFESTIKKGVALVDFWAPWCGPCKMLSPVIDELASEYEGKAKICKVNTDEQEELSAKFGIRSIPTLLFTKDGEVVHQLVGVQTKVALKEQLNKLLG.

Positions 2 to 106 constitute a Thioredoxin domain; it reads SHYIELTEEN…LKEQLNKLLG (105 aa). The cysteines at positions 30 and 33 are disulfide-linked.

This sequence belongs to the thioredoxin family.

Its function is as follows. Participates in various redox reactions through the reversible oxidation of its active center dithiol to a disulfide and catalyzes dithiol-disulfide exchange reactions. This chain is Thioredoxin (trxA), found in Helicobacter pylori (strain J99 / ATCC 700824) (Campylobacter pylori J99).